Reading from the N-terminus, the 299-residue chain is Protein LacX, plasmid (299 aa).

This chain is Protein LacX, plasmid (lacX), found in Lactococcus lactis subsp. lactis (Streptococcus lactis).